Consider the following 576-residue polypeptide: Adenine deaminase (576 aa).

It belongs to the metallo-dependent hydrolases superfamily. Adenine deaminase family. Mn(2+) is required as a cofactor.

The catalysed reaction is adenine + H2O + H(+) = hypoxanthine + NH4(+). The sequence is that of Adenine deaminase from Syntrophobacter fumaroxidans (strain DSM 10017 / MPOB).